The sequence spans 159 residues: Ribosomal RNA large subunit methyltransferase H (159 aa).

Residues L76, G108, and 127 to 132 (MSKMTF) contribute to the S-adenosyl-L-methionine site.

Belongs to the RNA methyltransferase RlmH family. Homodimer.

It is found in the cytoplasm. The enzyme catalyses pseudouridine(1915) in 23S rRNA + S-adenosyl-L-methionine = N(3)-methylpseudouridine(1915) in 23S rRNA + S-adenosyl-L-homocysteine + H(+). Specifically methylates the pseudouridine at position 1915 (m3Psi1915) in 23S rRNA. This Ureaplasma parvum serovar 3 (strain ATCC 27815 / 27 / NCTC 11736) protein is Ribosomal RNA large subunit methyltransferase H.